The chain runs to 172 residues: Large ribosomal subunit protein uL10 (172 aa).

It belongs to the universal ribosomal protein uL10 family. In terms of assembly, part of the ribosomal stalk of the 50S ribosomal subunit. The N-terminus interacts with L11 and the large rRNA to form the base of the stalk. The C-terminus forms an elongated spine to which L12 dimers bind in a sequential fashion forming a multimeric L10(L12)X complex.

Functionally, forms part of the ribosomal stalk, playing a central role in the interaction of the ribosome with GTP-bound translation factors. The chain is Large ribosomal subunit protein uL10 (rplJ) from Liberibacter asiaticus (Citrus greening disease).